A 1064-amino-acid chain; its full sequence is Carbamoyl phosphate synthase large chain (1064 aa).

The carboxyphosphate synthetic domain stretch occupies residues 1–401 (MPKRNDIKKI…SLLKAVRSLE (401 aa)). ATP is bound by residues R129, R169, G175, G176, E208, I210, E215, G241, V242, H243, Q284, and E298. Residues 133 to 327 (KELCESINEP…IAKMSAKIAI (195 aa)) form the ATP-grasp 1 domain. Mg(2+) is bound by residues Q284, E298, and N300. Residues Q284, E298, and N300 each coordinate Mn(2+). Residues 402–546 (IGVFHNEMTE…YSTYEWENES (145 aa)) form an oligomerization domain region. The tract at residues 547-929 (KRSDKEKIIV…ALYKSFEAAK (383 aa)) is carbamoyl phosphate synthetic domain. The region spanning 671 to 861 (EKALQDLDIP…MAQLATQMIL (191 aa)) is the ATP-grasp 2 domain. ATP contacts are provided by R707, S746, L748, E752, G777, V778, H779, S780, Q820, and E832. Positions 820, 832, and 834 each coordinate Mg(2+). Mn(2+) contacts are provided by Q820, E832, and N834. One can recognise an MGS-like domain in the interval 930-1064 (LHMADYGSVL…QSRSFTTKNI (135 aa)). The interval 930–1064 (LHMADYGSVL…QSRSFTTKNI (135 aa)) is allosteric domain.

This sequence belongs to the CarB family. As to quaternary structure, composed of two chains; the small (or glutamine) chain promotes the hydrolysis of glutamine to ammonia, which is used by the large (or ammonia) chain to synthesize carbamoyl phosphate. Tetramer of heterodimers (alpha,beta)4. It depends on Mg(2+) as a cofactor. Mn(2+) serves as cofactor.

The catalysed reaction is hydrogencarbonate + L-glutamine + 2 ATP + H2O = carbamoyl phosphate + L-glutamate + 2 ADP + phosphate + 2 H(+). It catalyses the reaction hydrogencarbonate + NH4(+) + 2 ATP = carbamoyl phosphate + 2 ADP + phosphate + 2 H(+). The protein operates within amino-acid biosynthesis; L-arginine biosynthesis; carbamoyl phosphate from bicarbonate: step 1/1. It functions in the pathway pyrimidine metabolism; UMP biosynthesis via de novo pathway; (S)-dihydroorotate from bicarbonate: step 1/3. Large subunit of the glutamine-dependent carbamoyl phosphate synthetase (CPSase). CPSase catalyzes the formation of carbamoyl phosphate from the ammonia moiety of glutamine, carbonate, and phosphate donated by ATP, constituting the first step of 2 biosynthetic pathways, one leading to arginine and/or urea and the other to pyrimidine nucleotides. The large subunit (synthetase) binds the substrates ammonia (free or transferred from glutamine from the small subunit), hydrogencarbonate and ATP and carries out an ATP-coupled ligase reaction, activating hydrogencarbonate by forming carboxy phosphate which reacts with ammonia to form carbamoyl phosphate. The sequence is that of Carbamoyl phosphate synthase large chain from Lactococcus lactis subsp. cremoris (strain MG1363).